The chain runs to 245 residues: Probable phosphatase NT01EI_1577 (245 aa).

Residues H7, H9, H15, H40, E73, H101, H131, D192, and H194 each contribute to the Zn(2+) site.

The protein belongs to the PHP family. Homotrimer. Zn(2+) is required as a cofactor.

In Edwardsiella ictaluri (strain 93-146), this protein is Probable phosphatase NT01EI_1577.